We begin with the raw amino-acid sequence, 73 residues long: Nodulin-1 (73 aa).

The first 23 residues, 1–23, serve as a signal peptide directing secretion; that stretch reads MERKTLASLCFFLIVLLAAQVVA. Disulfide bonds link Cys-39–Cys-64, Cys-49–Cys-71, and Cys-53–Cys-73.

Expressed in nodules, but not in leaves, stems, flowers and roots. In developing nodules, expressed close to the infection threads.

It localises to the secreted. Nodulation-related protein probably involved in the infection process. In Medicago truncatula (Barrel medic), this protein is Nodulin-1 (N1).